The chain runs to 506 residues: Ribose import ATP-binding protein RbsA 1 (506 aa).

ABC transporter domains are found at residues 5 to 241 (LALT…VGRR) and 254 to 498 (RDAA…TSDA). 37–44 (GENGAGKS) is an ATP binding site.

The protein belongs to the ABC transporter superfamily. Ribose importer (TC 3.A.1.2.1) family. As to quaternary structure, the complex is composed of an ATP-binding protein (RbsA), two transmembrane proteins (RbsC) and a solute-binding protein (RbsB).

It is found in the cell inner membrane. The enzyme catalyses D-ribose(out) + ATP + H2O = D-ribose(in) + ADP + phosphate + H(+). Part of the ABC transporter complex RbsABC involved in ribose import. Responsible for energy coupling to the transport system. In Burkholderia thailandensis (strain ATCC 700388 / DSM 13276 / CCUG 48851 / CIP 106301 / E264), this protein is Ribose import ATP-binding protein RbsA 1.